The chain runs to 95 residues: Aspartyl/glutamyl-tRNA(Asn/Gln) amidotransferase subunit C (95 aa).

This sequence belongs to the GatC family. In terms of assembly, heterotrimer of A, B and C subunits.

The catalysed reaction is L-glutamyl-tRNA(Gln) + L-glutamine + ATP + H2O = L-glutaminyl-tRNA(Gln) + L-glutamate + ADP + phosphate + H(+). It carries out the reaction L-aspartyl-tRNA(Asn) + L-glutamine + ATP + H2O = L-asparaginyl-tRNA(Asn) + L-glutamate + ADP + phosphate + 2 H(+). Allows the formation of correctly charged Asn-tRNA(Asn) or Gln-tRNA(Gln) through the transamidation of misacylated Asp-tRNA(Asn) or Glu-tRNA(Gln) in organisms which lack either or both of asparaginyl-tRNA or glutaminyl-tRNA synthetases. The reaction takes place in the presence of glutamine and ATP through an activated phospho-Asp-tRNA(Asn) or phospho-Glu-tRNA(Gln). The chain is Aspartyl/glutamyl-tRNA(Asn/Gln) amidotransferase subunit C from Hyphomonas neptunium (strain ATCC 15444).